A 432-amino-acid polypeptide reads, in one-letter code: D-amino acid dehydrogenase (432 aa).

3-17 (VVILGSGVVGVTSAW) contacts FAD.

Belongs to the DadA oxidoreductase family. It depends on FAD as a cofactor.

The catalysed reaction is a D-alpha-amino acid + A + H2O = a 2-oxocarboxylate + AH2 + NH4(+). The protein operates within amino-acid degradation; D-alanine degradation; NH(3) and pyruvate from D-alanine: step 1/1. Its function is as follows. Oxidative deamination of D-amino acids. The chain is D-amino acid dehydrogenase from Citrobacter koseri (strain ATCC BAA-895 / CDC 4225-83 / SGSC4696).